The primary structure comprises 96 residues: MEAEALKFFIACVTAAGFGIAIAAFGCGIGQGLGLKAAAEGVARNPEASGKITVTMLIGLAMIESLCIYALVVALILIFASPMTATVTGLLTGAGH.

Helical transmembrane passes span 9–29 (FIAC…GCGI) and 58–78 (IGLA…LILI).

The protein belongs to the ATPase C chain family. In terms of assembly, F-type ATPases have 2 components, F(1) - the catalytic core - and F(0) - the membrane proton channel. F(1) has five subunits: alpha(3), beta(3), gamma(1), delta(1), epsilon(1). F(0) has three main subunits: a(1), b(2) and c(10-14). The alpha and beta chains form an alternating ring which encloses part of the gamma chain. F(1) is attached to F(0) by a central stalk formed by the gamma and epsilon chains, while a peripheral stalk is formed by the delta and b chains.

The protein localises to the cell inner membrane. In terms of biological role, f(1)F(0) ATP synthase produces ATP from ADP in the presence of a proton or sodium gradient. F-type ATPases consist of two structural domains, F(1) containing the extramembraneous catalytic core and F(0) containing the membrane proton channel, linked together by a central stalk and a peripheral stalk. During catalysis, ATP synthesis in the catalytic domain of F(1) is coupled via a rotary mechanism of the central stalk subunits to proton translocation. Its function is as follows. Key component of the F(0) channel; it plays a direct role in translocation across the membrane. A homomeric c-ring of between 10-14 subunits forms the central stalk rotor element with the F(1) delta and epsilon subunits. The chain is ATP synthase subunit c from Desulfosudis oleivorans (strain DSM 6200 / JCM 39069 / Hxd3) (Desulfococcus oleovorans).